The primary structure comprises 93 residues: uncharacterized protein (93 aa).

This is an uncharacterized protein from Acidianus sp. F28 (AFV-2).